The primary structure comprises 217 residues: Cyclin-P2-1 (217 aa).

The protein belongs to the cyclin family. Cyclin U/P subfamily.

This chain is Cyclin-P2-1 (CYCP2-1), found in Oryza sativa subsp. japonica (Rice).